Here is a 1316-residue protein sequence, read N- to C-terminus: Serine/threonine-protein kinase 36 (1316 aa).

Residues tyrosine 4–isoleucine 254 enclose the Protein kinase domain. Residues isoleucine 10–valine 18 and lysine 33 each bind ATP. The Proton acceptor role is filled by aspartate 125. The disordered stretch occupies residues glutamine 389–aspartate 418. Positions valine 407–aspartate 418 are enriched in acidic residues.

This sequence belongs to the protein kinase superfamily. Ser/Thr protein kinase family. Interacts with SPAG16 and KIF27. Mg(2+) serves as cofactor. Weakly expressed in the heart and thymus, present at moderate to high levels in the lungs, pancreas, and kidneys and at higher levels in the brain and cerebellum. Very highly expressed in the testis.

The protein resides in the cytoplasm. It is found in the nucleus. It localises to the cytoskeleton. The protein localises to the cilium axoneme. It catalyses the reaction L-seryl-[protein] + ATP = O-phospho-L-seryl-[protein] + ADP + H(+). The enzyme catalyses L-threonyl-[protein] + ATP = O-phospho-L-threonyl-[protein] + ADP + H(+). Functionally, serine/threonine protein kinase which plays an important role in the sonic hedgehog (Shh) pathway by regulating the activity of GLI transcription factors. Controls the activity of the transcriptional regulators GLI1, GLI2 and GLI3 by opposing the effect of SUFU and promoting their nuclear localization. GLI2 requires an additional function of STK36 to become transcriptionally active, but the enzyme does not need to possess an active kinase catalytic site for this to occur. Required for postnatal development, possibly by regulating the homeostasis of cerebral spinal fluid or ciliary function. Essential for construction of the central pair apparatus of motile cilia. This is Serine/threonine-protein kinase 36 from Mus musculus (Mouse).